A 91-amino-acid polypeptide reads, in one-letter code: Non-specific lipid-transfer protein 1 (91 aa).

4 disulfides stabilise this stretch: Cys3–Cys50, Cys13–Cys27, Cys28–Cys73, and Cys48–Cys87.

Belongs to the plant LTP family.

Plant non-specific lipid-transfer proteins transfer phospholipids as well as galactolipids across membranes. May play a role in wax or cutin deposition in the cell walls of expanding epidermal cells and certain secretory tissues. The sequence is that of Non-specific lipid-transfer protein 1 from Prunus persica (Peach).